A 732-amino-acid polypeptide reads, in one-letter code: 1,4-alpha-glucan branching enzyme GlgB 2 (732 aa).

Catalysis depends on Asp-413, which acts as the Nucleophile. Glu-466 acts as the Proton donor in catalysis.

The protein belongs to the glycosyl hydrolase 13 family. GlgB subfamily. As to quaternary structure, monomer.

The enzyme catalyses Transfers a segment of a (1-&gt;4)-alpha-D-glucan chain to a primary hydroxy group in a similar glucan chain.. It participates in glycan biosynthesis; glycogen biosynthesis. Its function is as follows. Catalyzes the formation of the alpha-1,6-glucosidic linkages in glycogen by scission of a 1,4-alpha-linked oligosaccharide from growing alpha-1,4-glucan chains and the subsequent attachment of the oligosaccharide to the alpha-1,6 position. The sequence is that of 1,4-alpha-glucan branching enzyme GlgB 2 from Rhizobium etli (strain ATCC 51251 / DSM 11541 / JCM 21823 / NBRC 15573 / CFN 42).